The sequence spans 170 residues: Large ribosomal subunit protein uL10 (170 aa).

It belongs to the universal ribosomal protein uL10 family. Part of the ribosomal stalk of the 50S ribosomal subunit. The N-terminus interacts with L11 and the large rRNA to form the base of the stalk. The C-terminus forms an elongated spine to which L12 dimers bind in a sequential fashion forming a multimeric L10(L12)X complex.

In terms of biological role, forms part of the ribosomal stalk, playing a central role in the interaction of the ribosome with GTP-bound translation factors. The protein is Large ribosomal subunit protein uL10 of Jannaschia sp. (strain CCS1).